Here is a 1218-residue protein sequence, read N- to C-terminus: Probable cation-transporting ATPase 13A5 (1218 aa).

4 consecutive transmembrane segments (helical) span residues lysine 33–tryptophan 53, glycine 222–valine 242, phenylalanine 401–methionine 421, and methionine 433–glycine 453. Aspartate 486 functions as the 4-aspartylphosphate intermediate in the catalytic mechanism. N-linked (GlcNAc...) asparagine glycans are attached at residues asparagine 540, asparagine 669, and asparagine 819. Residues aspartate 850 and aspartate 854 each contribute to the Mg(2+) site. The next 6 membrane-spanning stretches (helical) occupy residues phenylalanine 903 to leucine 923, valine 940 to tyrosine 956, leucine 973 to leucine 993, phenylalanine 1042 to phenylalanine 1062, isoleucine 1077 to phenylalanine 1097, and valine 1115 to isoleucine 1135.

Belongs to the cation transport ATPase (P-type) (TC 3.A.3) family. Type V subfamily.

Its subcellular location is the membrane. It carries out the reaction ATP + H2O = ADP + phosphate + H(+). This is Probable cation-transporting ATPase 13A5 (ATP13A5) from Homo sapiens (Human).